Here is a 369-residue protein sequence, read N- to C-terminus: Anhydro-N-acetylmuramic acid kinase (369 aa).

12 to 19 is an ATP binding site; it reads GTSLDGVD.

It belongs to the anhydro-N-acetylmuramic acid kinase family.

It catalyses the reaction 1,6-anhydro-N-acetyl-beta-muramate + ATP + H2O = N-acetyl-D-muramate 6-phosphate + ADP + H(+). Its pathway is amino-sugar metabolism; 1,6-anhydro-N-acetylmuramate degradation. It participates in cell wall biogenesis; peptidoglycan recycling. Its function is as follows. Catalyzes the specific phosphorylation of 1,6-anhydro-N-acetylmuramic acid (anhMurNAc) with the simultaneous cleavage of the 1,6-anhydro ring, generating MurNAc-6-P. Is required for the utilization of anhMurNAc either imported from the medium or derived from its own cell wall murein, and thus plays a role in cell wall recycling. This is Anhydro-N-acetylmuramic acid kinase from Escherichia coli (strain K12 / MC4100 / BW2952).